A 686-amino-acid polypeptide reads, in one-letter code: Rhophilin-2 (686 aa).

Residues 26–100 form the REM-1 domain; the sequence is NPLAQTGRSK…LEGLNISVGV (75 aa). The tract at residues 46 to 66 is interaction with Rho; the sequence is QILKAVRMRTGAENLLKVATN. The BRO1 domain maps to 111–502; that stretch reads PLIPLGLKET…TDFFQKLGPL (392 aa). In terms of domain architecture, PDZ spans 515–593; the sequence is RGIHFTVEEG…EEVEMKVVSL (79 aa). Thr-655 is modified (phosphothreonine).

It belongs to the RHPN family. As to quaternary structure, interacts with GTP-bound RhoA and RhoB. Interacts with both GTP- and GDP-bound RhoA. Interacts with KRT18.

The protein localises to the cytoplasm. The protein resides in the perinuclear region. In terms of biological role, binds specifically to GTP-Rho. May function in a Rho pathway to limit stress fiber formation and/or increase the turnover of F-actin structures in the absence of high levels of RhoA activity. The polypeptide is Rhophilin-2 (Rhpn2) (Mus musculus (Mouse)).